A 1325-amino-acid polypeptide reads, in one-letter code: Lysine-specific demethylase 3A (1325 aa).

3 disordered regions span residues 249 to 284 (SKRI…QGHV), 300 to 333 (PANK…RRSV), and 372 to 399 (QNGK…TGLK). Over residues 274–283 (SPEVSQSQGH) the composition is skewed to polar residues. Residues 378 to 390 (SLISSRSSSLSDS) are compositionally biased toward low complexity. The C6-type zinc-finger motif lies at 669 to 694 (CDVCDTTIFNLRWVCSKCGFGVCVDC). Disordered stretches follow at residues 772-791 (TLKE…SLQQ) and 798-819 (PQLP…TASV). The LXXLL motif signature appears at 888-892 (LRNLL). The JmjC domain occupies 1062–1285 (MPSRFDDLMK…HCFWLTQEFR (224 aa)). His1124, Asp1126, and His1253 together coordinate Fe cation.

The protein belongs to the JHDM2 histone demethylase family. The cofactor is Fe(2+).

It localises to the cytoplasm. It is found in the nucleus. It carries out the reaction N(6),N(6)-dimethyl-L-lysyl(9)-[histone H3] + 2 2-oxoglutarate + 2 O2 = L-lysyl(9)-[histone H3] + 2 formaldehyde + 2 succinate + 2 CO2. In terms of biological role, histone demethylase that specifically demethylates 'Lys-9' of histone H3, thereby playing a central role in histone code. Preferentially demethylates mono- and dimethylated H3 'Lys-9' residue, with a preference for dimethylated residue, while it has weak or no activity on trimethylated H3 'Lys-9'. Demethylation of Lys residue generates formaldehyde and succinate. In Gallus gallus (Chicken), this protein is Lysine-specific demethylase 3A (KDM3A).